The chain runs to 604 residues: Rhotekin-2 (604 aa).

Residues 1–74 (MEGQLLRGLA…LQKSKEEIAN (74 aa)) enclose the REM-1 domain. Positions 53 to 79 (VCSARIQAYTAELQKSKEEIANQTGAR) form a coiled coil. The PH domain occupies 281-387 (ADAFAGFLNE…WMGAFRQHFF (107 aa)). The segment at 481–590 (LSPIGEPAPD…PVPVPRQKSI (110 aa)) is disordered. Positions 514–527 (GRANQSKDSATQAG) are enriched in polar residues. Residues 529–543 (SGASSSPSDPRLSPP) show a composition bias toward low complexity.

May play an important role in lymphopoiesis. In Mus musculus (Mouse), this protein is Rhotekin-2 (Rtkn2).